Reading from the N-terminus, the 157-residue chain is Transcriptional repressor NrdR (157 aa).

Residues 3-34 fold into a zinc finger; sequence CPSCQNTDSRVLESRSADAGKCVRRRRECLNC. The ATP-cone domain maps to 49-139; the sequence is VTVIKRSNAK…VYRQFNGIED (91 aa).

The protein belongs to the NrdR family. Zn(2+) serves as cofactor.

Its function is as follows. Negatively regulates transcription of bacterial ribonucleotide reductase nrd genes and operons by binding to NrdR-boxes. The polypeptide is Transcriptional repressor NrdR (Prochlorococcus marinus (strain SARG / CCMP1375 / SS120)).